Consider the following 352-residue polypeptide: Photosystem II protein D1 (352 aa).

Position 2 is an N-acetylthreonine (Thr-2). Thr-2 carries the post-translational modification Phosphothreonine. 3 helical membrane passes run 29–46 (YIGW…TATS), 118–133 (HFLL…EWEL), and 142–156 (WIAV…AATA). Chlorophyll a is bound at residue His-118. Tyr-126 is a binding site for pheophytin a. [CaMn4O5] cluster contacts are provided by Asp-170 and Glu-189. The helical transmembrane segment at 197–218 (FHMLGVAGVFGGSLFSAMHGSL) threads the bilayer. Position 198 (His-198) interacts with chlorophyll a. A quinone-binding positions include His-215 and 264 to 265 (SF). His-215 is a binding site for Fe cation. His-272 is a binding site for Fe cation. Residues 274–288 (FLAAWPVVGIWFTAL) traverse the membrane as a helical segment. The [CaMn4O5] cluster site is built by His-332, Glu-333, Asp-342, and Ala-344. The propeptide occupies 345–352 (SVEAPVVG).

Belongs to the reaction center PufL/M/PsbA/D family. As to quaternary structure, PSII is composed of 1 copy each of membrane proteins PsbA, PsbB, PsbC, PsbD, PsbE, PsbF, PsbH, PsbI, PsbJ, PsbK, PsbL, PsbM, PsbT, PsbX, PsbY, PsbZ, Psb30/Ycf12, at least 3 peripheral proteins of the oxygen-evolving complex and a large number of cofactors. It forms dimeric complexes. It depends on The D1/D2 heterodimer binds P680, chlorophylls that are the primary electron donor of PSII, and subsequent electron acceptors. It shares a non-heme iron and each subunit binds pheophytin, quinone, additional chlorophylls, carotenoids and lipids. D1 provides most of the ligands for the Mn4-Ca-O5 cluster of the oxygen-evolving complex (OEC). There is also a Cl(-1) ion associated with D1 and D2, which is required for oxygen evolution. The PSII complex binds additional chlorophylls, carotenoids and specific lipids. as a cofactor. Post-translationally, tyr-161 forms a radical intermediate that is referred to as redox-active TyrZ, YZ or Y-Z. In terms of processing, C-terminally processed by CTPA; processing is essential to allow assembly of the oxygen-evolving complex and thus photosynthetic growth.

It localises to the plastid. The protein resides in the chloroplast thylakoid membrane. The enzyme catalyses 2 a plastoquinone + 4 hnu + 2 H2O = 2 a plastoquinol + O2. Photosystem II (PSII) is a light-driven water:plastoquinone oxidoreductase that uses light energy to abstract electrons from H(2)O, generating O(2) and a proton gradient subsequently used for ATP formation. It consists of a core antenna complex that captures photons, and an electron transfer chain that converts photonic excitation into a charge separation. The D1/D2 (PsbA/PsbD) reaction center heterodimer binds P680, the primary electron donor of PSII as well as several subsequent electron acceptors. The sequence is that of Photosystem II protein D1 from Zygnema circumcarinatum (Green alga).